Reading from the N-terminus, the 259-residue chain is Bacillaene synthase dehydratase PksH (259 aa).

Residues D68 and E137 contribute to the active site.

It belongs to the enoyl-CoA hydratase/isomerase family.

It is found in the cytoplasm. It participates in antibiotic biosynthesis; bacillaene biosynthesis. Functionally, involved in some intermediate steps for the synthesis of the antibiotic polyketide bacillaene which is involved in secondary metabolism. Catalyzes the dehydration of the (S)-3-hydroxy-3-methylglutaryl group tethered to PksL to a 3-methylglutaconyl moiety. This Bacillus subtilis (strain 168) protein is Bacillaene synthase dehydratase PksH (pksH).